The following is a 106-amino-acid chain: MKSYAIIQTGSKQYQVSEGDVIDVELLDGISEGQEIVFDQVLFTFDGSKVSLGTPIVKDAVVKGQLLSQVRGEKVTAYKYKRRKNYHRKTGHRQNYLRVKISNLVI.

Belongs to the bacterial ribosomal protein bL21 family. As to quaternary structure, part of the 50S ribosomal subunit. Contacts protein L20.

Its function is as follows. This protein binds to 23S rRNA in the presence of protein L20. This chain is Large ribosomal subunit protein bL21, found in Chlamydia caviae (strain ATCC VR-813 / DSM 19441 / 03DC25 / GPIC) (Chlamydophila caviae).